Reading from the N-terminus, the 302-residue chain is Phosphoribosylaminoimidazole-succinocarboxamide synthase (302 aa).

The protein belongs to the SAICAR synthetase family.

It carries out the reaction 5-amino-1-(5-phospho-D-ribosyl)imidazole-4-carboxylate + L-aspartate + ATP = (2S)-2-[5-amino-1-(5-phospho-beta-D-ribosyl)imidazole-4-carboxamido]succinate + ADP + phosphate + 2 H(+). It functions in the pathway purine metabolism; IMP biosynthesis via de novo pathway; 5-amino-1-(5-phospho-D-ribosyl)imidazole-4-carboxamide from 5-amino-1-(5-phospho-D-ribosyl)imidazole-4-carboxylate: step 1/2. The sequence is that of Phosphoribosylaminoimidazole-succinocarboxamide synthase from Leptothrix cholodnii (strain ATCC 51168 / LMG 8142 / SP-6) (Leptothrix discophora (strain SP-6)).